The primary structure comprises 454 residues: Membrane-bound lytic murein transglycosylase F (454 aa).

The N-terminal stretch at 1–24 is a signal peptide; sequence MRRPLRRVTVVLLWVALAIGVAWF. The non-LT domain stretch occupies residues 25–265; the sequence is YDYRRSMQSL…IYNRYYTAVD (241 aa). Residues 266-454 form an LT domain region; it reads TFDYVDVKKF…YDILKQKKAV (189 aa). Glutamate 311 is an active-site residue.

It in the N-terminal section; belongs to the bacterial solute-binding protein 3 family. The protein in the C-terminal section; belongs to the transglycosylase Slt family.

Its subcellular location is the cell outer membrane. It catalyses the reaction Exolytic cleavage of the (1-&gt;4)-beta-glycosidic linkage between N-acetylmuramic acid (MurNAc) and N-acetylglucosamine (GlcNAc) residues in peptidoglycan, from either the reducing or the non-reducing ends of the peptidoglycan chains, with concomitant formation of a 1,6-anhydrobond in the MurNAc residue.. Murein-degrading enzyme that degrades murein glycan strands and insoluble, high-molecular weight murein sacculi, with the concomitant formation of a 1,6-anhydromuramoyl product. Lytic transglycosylases (LTs) play an integral role in the metabolism of the peptidoglycan (PG) sacculus. Their lytic action creates space within the PG sacculus to allow for its expansion as well as for the insertion of various structures such as secretion systems and flagella. This chain is Membrane-bound lytic murein transglycosylase F, found in Desulfosudis oleivorans (strain DSM 6200 / JCM 39069 / Hxd3) (Desulfococcus oleovorans).